The chain runs to 189 residues: ATP synthase subunit b (189 aa).

A helical membrane pass occupies residues 35–54 (LLAQMFNFLVLLILLRAVAY).

The protein belongs to the ATPase B chain family. As to quaternary structure, F-type ATPases have 2 components, F(1) - the catalytic core - and F(0) - the membrane proton channel. F(1) has five subunits: alpha(3), beta(3), gamma(1), delta(1), epsilon(1). F(0) has three main subunits: a(1), b(2) and c(10-14). The alpha and beta chains form an alternating ring which encloses part of the gamma chain. F(1) is attached to F(0) by a central stalk formed by the gamma and epsilon chains, while a peripheral stalk is formed by the delta and b chains.

It localises to the cell membrane. Its function is as follows. F(1)F(0) ATP synthase produces ATP from ADP in the presence of a proton or sodium gradient. F-type ATPases consist of two structural domains, F(1) containing the extramembraneous catalytic core and F(0) containing the membrane proton channel, linked together by a central stalk and a peripheral stalk. During catalysis, ATP synthesis in the catalytic domain of F(1) is coupled via a rotary mechanism of the central stalk subunits to proton translocation. Component of the F(0) channel, it forms part of the peripheral stalk, linking F(1) to F(0). This is ATP synthase subunit b from Desulforamulus reducens (strain ATCC BAA-1160 / DSM 100696 / MI-1) (Desulfotomaculum reducens).